Reading from the N-terminus, the 474-residue chain is Photosystem II CP43 reaction center protein (474 aa).

Residues 1-14 (MKTLYSLRRFYPVE) constitute a propeptide that is removed on maturation. An N-acetylthreonine modification is found at Thr-15. Position 15 is a phosphothreonine (Thr-15). 5 helical membrane passes run 69–93 (LFEVAHFVPEKPMYEQGLILLPHLA), 134–155 (LLGPETLEESFPFFGYVWKDRN), 178–201 (KALYFGGVYDTWAPGGGEMLRKIT), 256–276 (KPFAWARRALVWSGEAYLSYS), and 292–313 (WFNNTAYPSEFYGPTGPEASQA). Residue Glu-368 participates in [CaMn4O5] cluster binding. The chain crosses the membrane as a helical span at residues 448-472 (RARAAAAGFEKGIDRDFEPVLSMTP).

Belongs to the PsbB/PsbC family. PsbC subfamily. PSII is composed of 1 copy each of membrane proteins PsbA, PsbB, PsbC, PsbD, PsbE, PsbF, PsbH, PsbI, PsbJ, PsbK, PsbL, PsbM, PsbT, PsbX, PsbY, PsbZ, Psb30/Ycf12, at least 3 peripheral proteins of the oxygen-evolving complex and a large number of cofactors. It forms dimeric complexes. Binds multiple chlorophylls and provides some of the ligands for the Ca-4Mn-5O cluster of the oxygen-evolving complex. It may also provide a ligand for a Cl- that is required for oxygen evolution. PSII binds additional chlorophylls, carotenoids and specific lipids. serves as cofactor.

It localises to the plastid. It is found in the chloroplast thylakoid membrane. One of the components of the core complex of photosystem II (PSII). It binds chlorophyll and helps catalyze the primary light-induced photochemical processes of PSII. PSII is a light-driven water:plastoquinone oxidoreductase, using light energy to abstract electrons from H(2)O, generating O(2) and a proton gradient subsequently used for ATP formation. The polypeptide is Photosystem II CP43 reaction center protein (Citrus sinensis (Sweet orange)).